The following is a 388-amino-acid chain: Succinate--CoA ligase [ADP-forming] subunit beta (388 aa).

The region spanning 9–244 (KQLFARSGLP…QSQEDPREAQ (236 aa)) is the ATP-grasp domain. ATP is bound by residues Lys46, 53-55 (GRG), Glu99, Thr102, and Glu107. Residues Asn199 and Asp213 each contribute to the Mg(2+) site. Substrate is bound by residues Asn264 and 321-323 (GIV).

The protein belongs to the succinate/malate CoA ligase beta subunit family. Heterotetramer of two alpha and two beta subunits. Mg(2+) serves as cofactor.

The catalysed reaction is succinate + ATP + CoA = succinyl-CoA + ADP + phosphate. It carries out the reaction GTP + succinate + CoA = succinyl-CoA + GDP + phosphate. The protein operates within carbohydrate metabolism; tricarboxylic acid cycle; succinate from succinyl-CoA (ligase route): step 1/1. In terms of biological role, succinyl-CoA synthetase functions in the citric acid cycle (TCA), coupling the hydrolysis of succinyl-CoA to the synthesis of either ATP or GTP and thus represents the only step of substrate-level phosphorylation in the TCA. The beta subunit provides nucleotide specificity of the enzyme and binds the substrate succinate, while the binding sites for coenzyme A and phosphate are found in the alpha subunit. The sequence is that of Succinate--CoA ligase [ADP-forming] subunit beta from Cronobacter sakazakii (strain ATCC BAA-894) (Enterobacter sakazakii).